Reading from the N-terminus, the 103-residue chain is Co-chaperonin GroES (103 aa).

Belongs to the GroES chaperonin family. Heptamer of 7 subunits arranged in a ring. Interacts with the chaperonin GroEL.

It localises to the cytoplasm. Its function is as follows. Together with the chaperonin GroEL, plays an essential role in assisting protein folding. The GroEL-GroES system forms a nano-cage that allows encapsulation of the non-native substrate proteins and provides a physical environment optimized to promote and accelerate protein folding. GroES binds to the apical surface of the GroEL ring, thereby capping the opening of the GroEL channel. This Gloeothece citriformis (strain PCC 7424) (Cyanothece sp. (strain PCC 7424)) protein is Co-chaperonin GroES.